We begin with the raw amino-acid sequence, 283 residues long: Non-selective voltage-gated ion channel VDAC3 (283 aa).

At Cys-2 the chain carries N-acetylcysteine. Thr-4 bears the Phosphothreonine mark. Residues Lys-12, Lys-15, and Lys-20 each carry the N6-acetyllysine modification. 2 consecutive transmembrane segments (beta stranded) span residues 26 to 35 (MVKIDLRTKS) and 39 to 47 (VEFSTSGHA). Lys-53 participates in a covalent cross-link: Glycyl lysine isopeptide (Lys-Gly) (interchain with G-Cter in ubiquitin). 3 beta stranded membrane passes run 54–64 (ASGNLETKYKV), 69–76 (LTFTQKWN), and 80–89 (TLGTEISLEN). Lys-90 bears the N6-acetyllysine mark. A beta stranded membrane pass occupies residues 95–104 (LKLTLDTIFV). Residues Lys-109 and Lys-110 each participate in a glycyl lysine isopeptide (Lys-Gly) (interchain with G-Cter in ubiquitin) cross-link. 10 beta stranded membrane-spanning segments follow: residues 111 to 120 (SGKLKASYKR), 123 to 130 (FSLGSNVD), 137 to 145 (TIYGWAVLA), 150 to 158 (LAGYQMSFD), 163 to 175 (KLSQ…GYKA), 178 to 185 (FQLHTHVN), 189 to 198 (EFGGSIYQKV), 202 to 211 (IETSINLAWT), 218 to 227 (RFGIAAKYKL), and 231 to 238 (TSLSAKVN). The residue at position 241 (Ser-241) is a Phosphoserine. Residues 242–244 (LIG) and 260–264 (SALID) contribute to the NAD(+) site. 2 consecutive transmembrane segments (beta stranded) span residues 242–251 (LIGLGYTQTL) and 254–263 (GVKLTLSALI). An N6-acetyllysine; alternate modification is found at Lys-266. Lys-266 participates in a covalent cross-link: Glycyl lysine isopeptide (Lys-Gly) (interchain with G-Cter in ubiquitin); alternate. Residues 273 to 282 (HKVGLGFELE) form a beta stranded membrane-spanning segment.

The protein belongs to the eukaryotic mitochondrial porin family. In terms of assembly, interacts with ARMC12 in a TBC1D21-dependent manner. Interacts with MISFA. Post-translationally, ubiquitinated by PRKN during mitophagy, leading to its degradation and enhancement of mitophagy. Deubiquitinated by USP30.

The protein resides in the mitochondrion outer membrane. Its subcellular location is the membrane. The enzyme catalyses chloride(in) = chloride(out). It carries out the reaction K(+)(in) = K(+)(out). In terms of biological role, non-selective voltage-gated ion channel that mediates the transport of anions and cations through the mitochondrion outer membrane and plasma membrane. Forms a high-conducting channel with a stable open state and a voltage-induced closure with a mild preference for anions over cations. Involved in male fertility and sperm mitochondrial sheath formation. In Oryctolagus cuniculus (Rabbit), this protein is Non-selective voltage-gated ion channel VDAC3.